Reading from the N-terminus, the 255-residue chain is Methanethiol S-methyltransferase (255 aa).

A run of 5 helical transmembrane segments spans residues 16-36 (FVLL…VYAV), 56-76 (LVTA…QHSV), 99-119 (YVLF…PIGI), 131-151 (IIFY…TFLI), and 191-211 (VGWF…LVFA).

The protein belongs to the nurim family.

The protein localises to the membrane. The enzyme catalyses methanethiol + S-adenosyl-L-methionine = dimethyl sulfide + S-adenosyl-L-homocysteine + H(+). Its function is as follows. Catalyzes the methylation of methanethiol (MeSH) to yield dimethylsulphide (DMS). This Crocosphaera subtropica (strain ATCC 51142 / BH68) (Cyanothece sp. (strain ATCC 51142)) protein is Methanethiol S-methyltransferase.